Here is a 181-residue protein sequence, read N- to C-terminus: SAGA-associated factor 11 (181 aa).

Residues 93–114 (FNCMNCGRQIVAGRFAPHLEKC) form an SGF11-type zinc finger. A compositionally biased stretch (basic residues) spans 116–125 (GKGRKARAKT). Residues 116–181 (GKGRKARAKT…FTVRENVKGD (66 aa)) are disordered. A compositionally biased stretch (low complexity) spans 126-153 (TRSTTAAQNRNARRSPNPRYSPYPNSAS).

This sequence belongs to the SGF11 family. As to quaternary structure, component of a deubiquitination module (DUB module) formed by ENY2, SGF11, and UBP22 in Arabidopsis. Interacts directly with ENY2 and UBP22. Interacts with DDA1. In terms of processing, ubiquitinated in DET1-dependent manner. Ubiquitination probably leads to its subsequent proteasomal degradation.

The protein localises to the nucleus. The protein resides in the nucleoplasm. Functionally, component of a deubiquitination module (DUB module) that specifically deubiquinates monoubiquinated histone H2B (H2Bub). Does not seem to be a component of the TREX-2 complex. Seems to act independently of the SAGA multiprotein complex. The DUB module is responsible for the major H2Bub deubiquitinase activity in Arabidopsis. The chain is SAGA-associated factor 11 from Arabidopsis thaliana (Mouse-ear cress).